The sequence spans 173 residues: Photosystem I assembly protein Ycf3 (173 aa).

TPR repeat units lie at residues 35–68 (AFVY…EENP), 72–105 (SYIL…NPKM), and 120–153 (GEKA…APNN).

Belongs to the Ycf3 family.

The protein resides in the cellular thylakoid membrane. In terms of biological role, essential for the assembly of the photosystem I (PSI) complex. May act as a chaperone-like factor to guide the assembly of the PSI subunits. This is Photosystem I assembly protein Ycf3 from Synechocystis sp. (strain ATCC 27184 / PCC 6803 / Kazusa).